Consider the following 242-residue polypeptide: Uridylate kinase (242 aa).

16-19 lines the ATP pocket; sequence KVSG. Glycine 58 lines the UMP pocket. 2 residues coordinate ATP: glycine 59 and arginine 63. UMP contacts are provided by residues aspartate 78 and 139-146; that span reads TGNPFCTT. ATP contacts are provided by threonine 166, glutamine 167, tyrosine 172, and aspartate 175.

This sequence belongs to the UMP kinase family. As to quaternary structure, homohexamer.

Its subcellular location is the cytoplasm. The catalysed reaction is UMP + ATP = UDP + ADP. Its pathway is pyrimidine metabolism; CTP biosynthesis via de novo pathway; UDP from UMP (UMPK route): step 1/1. Inhibited by UTP. Functionally, catalyzes the reversible phosphorylation of UMP to UDP. The polypeptide is Uridylate kinase (Rickettsia felis (strain ATCC VR-1525 / URRWXCal2) (Rickettsia azadi)).